We begin with the raw amino-acid sequence, 789 residues long: Glycerol-3-phosphate acyltransferase (789 aa).

The short motif at 276-281 (HRSYID) is the HXXXXD motif element.

It belongs to the GPAT/DAPAT family.

It is found in the cell membrane. It catalyses the reaction sn-glycerol 3-phosphate + an acyl-CoA = a 1-acyl-sn-glycero-3-phosphate + CoA. The protein operates within phospholipid metabolism; CDP-diacylglycerol biosynthesis; CDP-diacylglycerol from sn-glycerol 3-phosphate: step 1/3. This is Glycerol-3-phosphate acyltransferase from Mycobacterium bovis (strain ATCC BAA-935 / AF2122/97).